We begin with the raw amino-acid sequence, 447 residues long: Neuronal acetylcholine receptor subunit alpha-10 (447 aa).

The signal sequence occupies residues 1 to 24; the sequence is MGTRSHYLDLGFLLLLFLPAECLG. The Extracellular portion of the chain corresponds to 25–237; it reads AEGRLAHKLF…FTLLLRRRAA (213 aa). 2 N-linked (GlcNAc...) asparagine glycosylation sites follow: N40 and N56. 2 disulfide bridges follow: C154-C168 and C218-C219. 3 helical membrane passes run 238–258, 268–288, and 302–322; these read AYVCNLLLPCVFISLLAPLAF, VSLGVTVLLALTVFQLILAES, and YMATMTMVTFSTALTILIMNL. Residues 323 to 425 are Cytoplasmic-facing; the sequence is HYCGPNAHPV…WKRLARVMDR (103 aa). The helical transmembrane segment at 426–446 threads the bilayer; it reads FFLGIFFCMALVMSLIVLVQA.

It belongs to the ligand-gated ion channel (TC 1.A.9) family. Acetylcholine receptor (TC 1.A.9.1) subfamily. Alpha-10/CHRNA10 sub-subfamily. In terms of assembly, forms homo- or heterooligomeric channels in conjunction with CHRNA10. The native outer hair cell receptor may be composed of CHRNA9:CHRNA10 heterooligomers. Found in the stoichiometric form (CHRNA9)2:(CHRNA10)3. Expressed in the outer hair cells of the cochlea and the neurons of dorsal root ganglia.

It is found in the synaptic cell membrane. Its subcellular location is the cell membrane. The enzyme catalyses Ca(2+)(in) = Ca(2+)(out). It carries out the reaction Mg(2+)(in) = Mg(2+)(out). The catalysed reaction is K(+)(in) = K(+)(out). It catalyses the reaction Na(+)(in) = Na(+)(out). With respect to regulation, activated by a myriad of ligands such as acetylcholine. AChR activity is inhibited by the antagonist alpha-conotoxins RgIA and GeXXA, small disulfide-constrained peptides from cone snails. In terms of biological role, component of neuronal acetylcholine receptors (nAChRs) that function as pentameric, ligand-gated cation channels with high calcium permeability among other activities. nAChRs are excitatory neurotrasnmitter receptors formed by a collection of nAChR subunits known to mediate synaptic transmission in the nervous system and the neuromuscular junction. Each nAchR subunit confers differential attributes to channel properties, including activation, deactivation and desensitization kinetics, pH sensitivity, cation permeability, and binding to allosteric modulators. Forms heteropentamers with CHRNA9. Expressed in the inner ear, in sympathetic neurons and in other non-neuronal cells, such as skin keratinocytes and lymphocytes. nAChR formed by CHRNA9:CHRNA10 mediate central nervous system control of auditory and vestibular sensory processing. The channel is permeable to a range of divalent cations including calcium, the influx of which may activate a potassium current which hyperpolarizes the cell membrane. In the ear, mediates synaptic transmission between efferent olivocochlear fibers and hair cells of the cochlea, this may lead to a reduction in basilar membrane motion, altering the activity of auditory nerve fibers and reducing the range of dynamic hearing. This may protect against acoustic trauma. May also regulate keratinocyte adhesion. The chain is Neuronal acetylcholine receptor subunit alpha-10 (Chrna10) from Rattus norvegicus (Rat).